A 339-amino-acid polypeptide reads, in one-letter code: Phosphate acyltransferase (339 aa).

Belongs to the PlsX family. In terms of assembly, homodimer. Probably interacts with PlsY.

It localises to the cytoplasm. It catalyses the reaction a fatty acyl-[ACP] + phosphate = an acyl phosphate + holo-[ACP]. It participates in lipid metabolism; phospholipid metabolism. In terms of biological role, catalyzes the reversible formation of acyl-phosphate (acyl-PO(4)) from acyl-[acyl-carrier-protein] (acyl-ACP). This enzyme utilizes acyl-ACP as fatty acyl donor, but not acyl-CoA. The chain is Phosphate acyltransferase from Moorella thermoacetica (strain ATCC 39073 / JCM 9320).